A 329-amino-acid polypeptide reads, in one-letter code: 4-hydroxythreonine-4-phosphate dehydrogenase (329 aa).

His-136 and Thr-137 together coordinate substrate. A divalent metal cation is bound by residues His-166, His-211, and His-266. Lys-274, Asn-283, and Arg-292 together coordinate substrate.

Belongs to the PdxA family. As to quaternary structure, homodimer. The cofactor is Zn(2+). It depends on Mg(2+) as a cofactor. Requires Co(2+) as cofactor.

It is found in the cytoplasm. It catalyses the reaction 4-(phosphooxy)-L-threonine + NAD(+) = 3-amino-2-oxopropyl phosphate + CO2 + NADH. It participates in cofactor biosynthesis; pyridoxine 5'-phosphate biosynthesis; pyridoxine 5'-phosphate from D-erythrose 4-phosphate: step 4/5. Its function is as follows. Catalyzes the NAD(P)-dependent oxidation of 4-(phosphooxy)-L-threonine (HTP) into 2-amino-3-oxo-4-(phosphooxy)butyric acid which spontaneously decarboxylates to form 3-amino-2-oxopropyl phosphate (AHAP). The sequence is that of 4-hydroxythreonine-4-phosphate dehydrogenase from Shigella dysenteriae serotype 1 (strain Sd197).